The chain runs to 298 residues: Formamidopyrimidine-DNA glycosylase (298 aa).

Pro-2 functions as the Schiff-base intermediate with DNA in the catalytic mechanism. Catalysis depends on Glu-3, which acts as the Proton donor. Lys-58 functions as the Proton donor; for beta-elimination activity in the catalytic mechanism. DNA contacts are provided by His-106, Arg-128, and Lys-171. The FPG-type zinc-finger motif lies at 262–298 (SVYDQEGQPCRTPGCGGTVERVVQAGRSTFYCAACQK). Arg-288 acts as the Proton donor; for delta-elimination activity in catalysis.

Belongs to the FPG family. In terms of assembly, monomer. Requires Zn(2+) as cofactor.

It carries out the reaction Hydrolysis of DNA containing ring-opened 7-methylguanine residues, releasing 2,6-diamino-4-hydroxy-5-(N-methyl)formamidopyrimidine.. The enzyme catalyses 2'-deoxyribonucleotide-(2'-deoxyribose 5'-phosphate)-2'-deoxyribonucleotide-DNA = a 3'-end 2'-deoxyribonucleotide-(2,3-dehydro-2,3-deoxyribose 5'-phosphate)-DNA + a 5'-end 5'-phospho-2'-deoxyribonucleoside-DNA + H(+). Its function is as follows. Involved in base excision repair of DNA damaged by oxidation or by mutagenic agents. Acts as a DNA glycosylase that recognizes and removes damaged bases. Has a preference for oxidized purines, such as 7,8-dihydro-8-oxoguanine (8-oxoG). Has AP (apurinic/apyrimidinic) lyase activity and introduces nicks in the DNA strand. Cleaves the DNA backbone by beta-delta elimination to generate a single-strand break at the site of the removed base with both 3'- and 5'-phosphates. The chain is Formamidopyrimidine-DNA glycosylase (mutM) from Agrobacterium fabrum (strain C58 / ATCC 33970) (Agrobacterium tumefaciens (strain C58)).